The primary structure comprises 176 residues: MPILTDFKAIATGLFVTWKHIFRRPVTVEYPEVKRTPAPRYRARIVLTRDPDGGERCVACYLCSAACPVDCISMEAAEGEEGRRYARWFRINFSRCIFCGLCAEACPTLAIQMTPDYEICERDIMELVYEKEDLLIDGCGKDAGYNFYRHAGIGVAQPRGAGECEEEPVDVRGLMP.

4Fe-4S ferredoxin-type domains follow at residues 45–77 (IVLT…MEAA) and 87–116 (RWFR…MTPD). Positions 57, 60, 63, 67, 96, 99, 102, and 106 each coordinate [4Fe-4S] cluster.

It belongs to the complex I 23 kDa subunit family. In terms of assembly, NDH-1 is composed of 14 different subunits. Subunits NuoA, H, J, K, L, M, N constitute the membrane sector of the complex. [4Fe-4S] cluster serves as cofactor.

The protein resides in the cell inner membrane. It catalyses the reaction a quinone + NADH + 5 H(+)(in) = a quinol + NAD(+) + 4 H(+)(out). Functionally, NDH-1 shuttles electrons from NADH, via FMN and iron-sulfur (Fe-S) centers, to quinones in the respiratory chain. The immediate electron acceptor for the enzyme in this species is believed to be ubiquinone. Couples the redox reaction to proton translocation (for every two electrons transferred, four hydrogen ions are translocated across the cytoplasmic membrane), and thus conserves the redox energy in a proton gradient. The polypeptide is NADH-quinone oxidoreductase subunit I 2 (Geobacter sulfurreducens (strain ATCC 51573 / DSM 12127 / PCA)).